Consider the following 245-residue polypeptide: 1-(5-phosphoribosyl)-5-[(5-phosphoribosylamino)methylideneamino] imidazole-4-carboxamide isomerase (245 aa).

The active-site Proton acceptor is Asp11. Asp132 acts as the Proton donor in catalysis.

Belongs to the HisA/HisF family.

It localises to the cytoplasm. The catalysed reaction is 1-(5-phospho-beta-D-ribosyl)-5-[(5-phospho-beta-D-ribosylamino)methylideneamino]imidazole-4-carboxamide = 5-[(5-phospho-1-deoxy-D-ribulos-1-ylimino)methylamino]-1-(5-phospho-beta-D-ribosyl)imidazole-4-carboxamide. It participates in amino-acid biosynthesis; L-histidine biosynthesis; L-histidine from 5-phospho-alpha-D-ribose 1-diphosphate: step 4/9. This chain is 1-(5-phosphoribosyl)-5-[(5-phosphoribosylamino)methylideneamino] imidazole-4-carboxamide isomerase, found in Geobacillus kaustophilus (strain HTA426).